We begin with the raw amino-acid sequence, 67 residues long: Protein SlyX homolog (67 aa).

A compositionally biased stretch (polar residues) spans 48-60; it reads TSAPSTAAESNPQ. Residues 48–67 are disordered; the sequence is TSAPSTAAESNPQHEIPPHY.

Belongs to the SlyX family.

This is Protein SlyX homolog from Cupriavidus pinatubonensis (strain JMP 134 / LMG 1197) (Cupriavidus necator (strain JMP 134)).